The chain runs to 381 residues: Alkanesulfonate monooxygenase (381 aa).

It belongs to the SsuD family. As to quaternary structure, homotetramer.

The enzyme catalyses an alkanesulfonate + FMNH2 + O2 = an aldehyde + FMN + sulfite + H2O + 2 H(+). Its function is as follows. Catalyzes the desulfonation of aliphatic sulfonates. This is Alkanesulfonate monooxygenase from Shigella flexneri serotype 5b (strain 8401).